The primary structure comprises 365 residues: tRNA 2-selenouridine synthase (365 aa).

The Rhodanese domain occupies 15–138 (LVNDHPIMDA…MRQFLIETID (124 aa)). Cys-98 (S-selanylcysteine intermediate) is an active-site residue.

This sequence belongs to the SelU family. Monomer.

The enzyme catalyses 5-methylaminomethyl-2-thiouridine(34) in tRNA + selenophosphate + (2E)-geranyl diphosphate + H2O + H(+) = 5-methylaminomethyl-2-selenouridine(34) in tRNA + (2E)-thiogeraniol + phosphate + diphosphate. The catalysed reaction is 5-methylaminomethyl-2-thiouridine(34) in tRNA + (2E)-geranyl diphosphate = 5-methylaminomethyl-S-(2E)-geranyl-thiouridine(34) in tRNA + diphosphate. It carries out the reaction 5-methylaminomethyl-S-(2E)-geranyl-thiouridine(34) in tRNA + selenophosphate + H(+) = 5-methylaminomethyl-2-(Se-phospho)selenouridine(34) in tRNA + (2E)-thiogeraniol. It catalyses the reaction 5-methylaminomethyl-2-(Se-phospho)selenouridine(34) in tRNA + H2O = 5-methylaminomethyl-2-selenouridine(34) in tRNA + phosphate. In terms of biological role, involved in the post-transcriptional modification of the uridine at the wobble position (U34) of tRNA(Lys), tRNA(Glu) and tRNA(Gln). Catalyzes the conversion of 2-thiouridine (S2U-RNA) to 2-selenouridine (Se2U-RNA). Acts in a two-step process involving geranylation of 2-thiouridine (S2U) to S-geranyl-2-thiouridine (geS2U) and subsequent selenation of the latter derivative to 2-selenouridine (Se2U) in the tRNA chain. This is tRNA 2-selenouridine synthase from Shewanella pealeana (strain ATCC 700345 / ANG-SQ1).